Consider the following 89-residue polypeptide: Putative regulatory protein PCC8801_0196 (89 aa).

Belongs to the RemA family.

This is Putative regulatory protein PCC8801_0196 from Rippkaea orientalis (strain PCC 8801 / RF-1) (Cyanothece sp. (strain PCC 8801)).